Here is a 424-residue protein sequence, read N- to C-terminus: MGQWKVMILICLYGAVKEFRPTEPYMYEYQHTVLNISEHTLNSEVYPIWTYSYLVALIPSFLLTDVLLYKPILIIEALSYFACWMIFVFGRSVWCMQLLELFYGWATATEIAYFAYIYVKVPKEDYKSATAYTRAALLVGRFLAYTLAQLLIGLNWADYMTLNIINLVSMTFAVFLAAILPHVPWRNAYQKKLEDKKSVTDLESLVSEAKYSDYLKLFFVELHQNLYTIYKNPLVLKWSIWSALSSCIFYQIINYTQTLWGTLPEKENKYNGIPEALVPLLGIPADLITRQMNVNWNRWGDALISVGSLLQAGLLFWMSQSHEIIILYICYIIYRVIYQLTTTIAQSTLALTLDSRLFGLLFGINTFVALALQSILTAIVIDAEKLAIRAQFVVYSGYHIVVATLFGIIFGIWAIRTIWRKRSH.

Asn-35 is a glycosylation site (N-linked (GlcNAc...) asparagine). The next 5 helical transmembrane spans lie at Val-55–Ile-75, Leu-78–Leu-98, Leu-101–Val-119, Ala-136–Trp-156, and Ile-164–Pro-184. Asn-254 carries an N-linked (GlcNAc...) asparagine glycan. A run of 3 helical transmembrane segments spans residues Gly-313–Ile-333, Leu-361–Ile-381, and Phe-392–Ile-412.

It belongs to the reduced folate carrier (RFC) transporter (TC 2.A.48) family.

It is found in the membrane. The sequence is that of Folate-like transporter 3 (folt-3) from Caenorhabditis elegans.